Here is a 410-residue protein sequence, read N- to C-terminus: Arginine deiminase (410 aa).

Catalysis depends on C399, which acts as the Amidino-cysteine intermediate.

The protein belongs to the arginine deiminase family.

The protein localises to the cytoplasm. The enzyme catalyses L-arginine + H2O = L-citrulline + NH4(+). It functions in the pathway amino-acid degradation; L-arginine degradation via ADI pathway; carbamoyl phosphate from L-arginine: step 1/2. This chain is Arginine deiminase, found in Listeria monocytogenes serotype 4b (strain F2365).